The sequence spans 1163 residues: Integrin alpha-X (1163 aa).

Residues 1-19 (MTRTRAALLLFTALATSLG) form the signal peptide. Residues 20-1107 (FNLDTEELTA…EKYKVHNPTP (1088 aa)) lie on the Extracellular side of the membrane. FG-GAP repeat units lie at residues 23–78 (DTEE…ACEP) and 79–138 (IGLQ…TQRL). N-linked (GlcNAc...) asparagine glycosylation is present at Asn61. Cys69 and Cys76 are disulfide-bonded. N-linked (GlcNAc...) asparagine glycosylation occurs at Asn89. 2 disulfide bridges follow: Cys108–Cys126 and Cys116–Cys145. The Mg(2+) site is built by Asp157, Ser159, Ser161, and Asp259. Positions 165–339 (RNFATMMNFV…KEKIFAIEGT (175 aa)) constitute a VWFA domain. 5 FG-GAP repeats span residues 340–391 (ETTS…PTFI), 392–443 (NMSQ…SRQW), 444–504 (RMKA…WRRW), 507–565 (DAVL…PSIS), and 570–630 (QRIA…FIPA). Residue Asn392 is glycosylated (N-linked (GlcNAc...) asparagine). The Ca(2+) site is built by Asp466, Asp468, Asp470, and Asp474. Cys495 and Cys506 form a disulfide bridge. The Ca(2+) site is built by Asp530, Asn532, Asp534, Asp538, Asp593, Asp597, and Asp601. 2 cysteine pairs are disulfide-bonded: Cys639-Cys722 and Cys655-Cys712. Residues Asn697 and Asn735 are each glycosylated (N-linked (GlcNAc...) asparagine). 2 cysteine pairs are disulfide-bonded: Cys771–Cys777 and Cys848–Cys863. Asn899 and Asn939 each carry an N-linked (GlcNAc...) asparagine glycan. 2 disulfide bridges follow: Cys998-Cys1022 and Cys1027-Cys1032. Residue Asn1050 is glycosylated (N-linked (GlcNAc...) asparagine). A helical transmembrane segment spans residues 1108-1128 (LIVGSSIGGLLLLALITAVLY). The Cytoplasmic portion of the chain corresponds to 1129-1163 (KVGFFKRQYKEMMEEANGQIAPENGTQTPSPPSEK). A GFFKR motif motif is present at residues 1131-1135 (GFFKR).

This sequence belongs to the integrin alpha chain family. In terms of assembly, heterodimer of an alpha and a beta subunit. Alpha-X associates with beta-2. In terms of tissue distribution, predominantly expressed in monocytes and granulocytes.

It is found in the membrane. Integrin alpha-X/beta-2 is a receptor for fibrinogen. It recognizes the sequence G-P-R in fibrinogen. It mediates cell-cell interaction during inflammatory responses. It is especially important in monocyte adhesion and chemotaxis. The polypeptide is Integrin alpha-X (ITGAX) (Homo sapiens (Human)).